Here is a 127-residue protein sequence, read N- to C-terminus: Transcription initiation factor IIA subunit 2 (127 aa).

It belongs to the TFIIA subunit 2 family. In terms of assembly, TFIIA is a heterodimer composed of the large TOA1 and the small TOA2 subunits.

Its subcellular location is the nucleus. TFIIA is a component of the transcription machinery of RNA polymerase II and plays an important role in transcriptional activation. TFIIA in a complex with tbp mediates transcriptional activity. This is Transcription initiation factor IIA subunit 2 (TOA2) from Cryptococcus neoformans var. neoformans serotype D (strain B-3501A) (Filobasidiella neoformans).